The sequence spans 546 residues: Carboxypeptidase Y homolog A (546 aa).

A signal peptide spans 1–17 (MKLLASTVLVGAAAASI). Residues 18–132 (TPQQQVLQNP…KLEQYNLRAK (115 aa)) constitute a propeptide that is removed on maturation. 5 cysteine pairs are disulfide-bonded: Cys-186/Cys-426, Cys-320/Cys-334, Cys-344/Cys-367, Cys-351/Cys-360, and Cys-389/Cys-396. The N-linked (GlcNAc...) asparagine glycan is linked to Asn-217. Ser-273 is a catalytic residue. Residue Asp-465 is part of the active site. N-linked (GlcNAc...) asparagine glycosylation is present at Asn-512. His-523 is a catalytic residue.

The protein belongs to the peptidase S10 family.

It is found in the vacuole. It carries out the reaction Release of a C-terminal amino acid with broad specificity.. In terms of biological role, vacuolar carboxypeptidase involved in degradation of small peptides. Digests preferentially peptides containing an aliphatic or hydrophobic residue in P1' position, as well as methionine, leucine or phenylalanine in P1 position of ester substrate. This chain is Carboxypeptidase Y homolog A (CPYA), found in Botryotinia fuckeliana (strain B05.10) (Noble rot fungus).